Consider the following 63-residue polypeptide: Rubredoxin-2 (63 aa).

The region spanning 8 to 59 is the Rubredoxin-like domain; the sequence is YKLFRCLQCGFEYDEAIGWPDDGIEPGTRWDEIPEDWSCPDCGAAKVDFEMV. Positions 13, 16, 46, and 49 each coordinate Fe cation.

This sequence belongs to the rubredoxin family. The cofactor is Fe(3+).

Involved in the hydrocarbon hydroxylating system, which transfers electrons from NADH to rubredoxin reductase and then through rubredoxin to alkane 1 monooxygenase. The chain is Rubredoxin-2 (rubA2) from Rhodococcus erythropolis (Arthrobacter picolinophilus).